A 209-amino-acid chain; its full sequence is Ribosome maturation factor RimM (209 aa).

In terms of domain architecture, PRC barrel spans 103-178; it reads EGATYVSDLV…RIEMVLPQGM (76 aa). The tract at residues 184 to 209 is disordered; it reads PLSKAEKERQKSEADETREAGERRKR. The span at 187–209 shows a compositional bias: basic and acidic residues; the sequence is KAEKERQKSEADETREAGERRKR.

This sequence belongs to the RimM family. As to quaternary structure, binds ribosomal protein uS19.

The protein resides in the cytoplasm. In terms of biological role, an accessory protein needed during the final step in the assembly of 30S ribosomal subunit, possibly for assembly of the head region. Essential for efficient processing of 16S rRNA. May be needed both before and after RbfA during the maturation of 16S rRNA. It has affinity for free ribosomal 30S subunits but not for 70S ribosomes. This is Ribosome maturation factor RimM from Koribacter versatilis (strain Ellin345).